The following is a 299-amino-acid chain: Bifunctional protein FolD 1 (299 aa).

Residues 168–170 (GRS), S193, and I234 each bind NADP(+).

It belongs to the tetrahydrofolate dehydrogenase/cyclohydrolase family. In terms of assembly, homodimer.

The enzyme catalyses (6R)-5,10-methylene-5,6,7,8-tetrahydrofolate + NADP(+) = (6R)-5,10-methenyltetrahydrofolate + NADPH. The catalysed reaction is (6R)-5,10-methenyltetrahydrofolate + H2O = (6R)-10-formyltetrahydrofolate + H(+). It functions in the pathway one-carbon metabolism; tetrahydrofolate interconversion. Its function is as follows. Catalyzes the oxidation of 5,10-methylenetetrahydrofolate to 5,10-methenyltetrahydrofolate and then the hydrolysis of 5,10-methenyltetrahydrofolate to 10-formyltetrahydrofolate. This chain is Bifunctional protein FolD 1, found in Rhizobium etli (strain ATCC 51251 / DSM 11541 / JCM 21823 / NBRC 15573 / CFN 42).